Here is an 875-residue protein sequence, read N- to C-terminus: Serine/threonine-protein phosphatase 4 regulatory subunit 4 (875 aa).

HEAT repeat units follow at residues 215–253 (ILPLVKSLCQDVEYEVRSCMCRQLENIAQGIGAELTKNV) and 254–292 (VLPELIELSRDESGSVRLAAFETLVNMLDMFDTDDRSQT). Positions 686–730 (MFQKKNYEKDLLDQEKEREELLFLEMEQLEKEKHQSDGRLASDKS) form a coiled coil. A compositionally biased stretch (basic and acidic residues) spans 718-739 (KHQSDGRLASDKSFEKKRRDSR). The disordered stretch occupies residues 718-773 (KHQSDGRLASDKSFEKKRRDSRTSTQSLSKNLPISVPGPSSSTASTSKEIKKSKLT). Positions 740-764 (TSTQSLSKNLPISVPGPSSSTASTS) are enriched in polar residues. At Ser777 the chain carries Phosphoserine. Thr799 carries the phosphothreonine modification. Residues 825 to 859 (RNASSVPASFSPNPVMPSTSRGPGNTADPKSSGSK) show a composition bias toward polar residues. The segment at 825–875 (RNASSVPASFSPNPVMPSTSRGPGNTADPKSSGSKDAQPRKATLKSRKSNP) is disordered. Basic residues predominate over residues 866-875 (ATLKSRKSNP).

Serine/threonine-protein phosphatase 4 (PP4) occurs in different assemblies of the catalytic and one or more regulatory subunits. Component of the PP4 complex PPP4C-PPP4R4.

Its subcellular location is the cytoplasm. In terms of biological role, putative regulatory subunit of serine/threonine-protein phosphatase 4. This is Serine/threonine-protein phosphatase 4 regulatory subunit 4 (Ppp4r4) from Mus musculus (Mouse).